The following is a 557-amino-acid chain: MAIPILDALTSSSGKKNSAEFSIHSTSNPTNPEEPNITSEADNAEDLAALGYKQEFQRGLSLFSVFSVSFSLLGLLPSVATTLPYSIGYTGTPGLLWGWLIAMVFIICIALSMAELCSAMPTSGGLYYAAAVLAPEGWGPLAAWFTGWSNYIAQLVGGPSINYSTAAMLLGAVNIGNPNYEVQNYQLFLVSIAIQFIHFILASMPTKYIAKLNSVGTYLNTLFLFISMIVILAMSSKNHGFNETSKVWSHIENYTDWPDGFAILMSFCGVIWTMSGYDAPFHMSEETANASVNAPRGIILTAAIGGIMGWVMQIVIAYTVVDQTAVVTGSDSMWATYLSQCLPKRAALGILSLTIVSSFLMGQSNLIASSRIAYSYARDGVLPYSEWVATVNPITKTPIRAVFVNFVIGVLILFLAFAGAITIGAVFSVTAIAAFTAFVAPVAMRVFFVKDADFRTGPFNLGKFSKPIGFCSVSFVALMIPILCFPSVKNPTPAEMNWTCLVFGAPMLAVLIWYAISGRKWFKGPRINLASEGDNSTLEGVELYTGSEELPQKKEKE.

The segment at 17-38 (NSAEFSIHSTSNPTNPEEPNIT) is disordered. The next 9 helical transmembrane spans lie at 60–80 (LSLF…PSVA), 94–114 (GLLW…LSMA), 214–234 (SVGT…ILAM), 261–281 (FAIL…DAPF), 297–317 (GIIL…IVIA), 348–368 (LGIL…NLIA), 407–427 (VIGV…GAVF), 468–488 (IGFC…FPSV), and 498–518 (WTCL…AISG).

It belongs to the amino acid-polyamine-organocation (APC) superfamily.

It is found in the membrane. This is an uncharacterized protein from Schizosaccharomyces pombe (strain 972 / ATCC 24843) (Fission yeast).